A 937-amino-acid chain; its full sequence is Translation initiation factor IF-2 (937 aa).

Residues 47–352 (RAAFQTKATP…EMPQRKERPL (306 aa)) are disordered. The segment covering 52–68 (TKATPAASKPATPAAPK) has biased composition (low complexity). Polar residues predominate over residues 97-116 (QHSNNRPQANANRNGQASNG). The segment covering 117–153 (QNRTNNARPNNNSARPNNSRPNTNSRPNNNSQNRSTS) has biased composition (low complexity). A compositionally biased stretch (polar residues) spans 154–169 (ANHPMSLQEQISQANA). The span at 173–197 (RTQERIQQQREQREADEKKRREQAN) shows a compositional bias: basic and acidic residues. Positions 202 to 229 (TRNNASNNRPSNGKPTNGARPTTNSPRP) are enriched in polar residues. Residues 240-269 (SSRPNNNNSARPNTTNNRPTNSRPATTPSR) show a composition bias toward low complexity. Residues 274 to 298 (QEMQQKMQANTVSASKPASNNTASK) are compositionally biased toward polar residues. The span at 322–331 (FNKKRKKTRK) shows a compositional bias: basic residues. Residues 339–352 (AAKKEMPQRKERPL) show a composition bias toward basic and acidic residues. Positions 438 to 607 (SRPPVVTIMG…LLEADVLELK (170 aa)) constitute a tr-type G domain. The segment at 447-454 (GHVDHGKT) is G1. 447–454 (GHVDHGKT) contributes to the GTP binding site. The segment at 472–476 (GITQH) is G2. A G3 region spans residues 493–496 (DTPG). Residues 493–497 (DTPGH) and 547–550 (NKID) each bind GTP. A G4 region spans residues 547–550 (NKID). The interval 583–585 (SAK) is G5.

This sequence belongs to the TRAFAC class translation factor GTPase superfamily. Classic translation factor GTPase family. IF-2 subfamily.

The protein localises to the cytoplasm. In terms of biological role, one of the essential components for the initiation of protein synthesis. Protects formylmethionyl-tRNA from spontaneous hydrolysis and promotes its binding to the 30S ribosomal subunits. Also involved in the hydrolysis of GTP during the formation of the 70S ribosomal complex. The chain is Translation initiation factor IF-2 from Latilactobacillus sakei subsp. sakei (strain 23K) (Lactobacillus sakei subsp. sakei).